The following is a 535-amino-acid chain: Peroxisomal membrane protein PEX29 (535 aa).

Helical transmembrane passes span 139-159 (LSVP…SKPL) and 176-196 (ILLL…PAYM). N-linked (GlcNAc...) asparagine glycosylation is present at asparagine 239. Residues 247-267 (MLLYVMSYDFVTSLIVKYLYF) form a helical membrane-spanning segment. The N-linked (GlcNAc...) asparagine glycan is linked to asparagine 271. 2 helical membrane-spanning segments follow: residues 272–292 (ITIF…LFGA) and 297–317 (AMLP…TIAM). N-linked (GlcNAc...) asparagine glycosylation is found at asparagine 450 and asparagine 515. Residues 511–535 (AHRRNKSMESSNSLHPVKSIDSVDG) are disordered.

The protein belongs to the PEX28-32 family. PEX29 subfamily.

The protein localises to the endoplasmic reticulum membrane. Functionally, with PEX23, contributes to the formation of endoplasmic reticulum-mitochondria junctions which are important for mitochondrial function. Involved in lipid dropplets formation. This is Peroxisomal membrane protein PEX29 from Ogataea parapolymorpha (strain ATCC 26012 / BCRC 20466 / JCM 22074 / NRRL Y-7560 / DL-1) (Yeast).